The sequence spans 323 residues: Sphingolipid delta(4)-desaturase/C4-monooxygenase DES2 (323 aa).

Glycine 2 is lipidated: N-myristoyl glycine. 2 helical membrane passes run 41–61 (PNIKWTVLGMVLVQVLACWLV) and 68–88 (WLLFWAYAFGGCINHSLTLAI). Residues 89–93 (HDISH) carry the Histidine box-1 motif. A required for C4-hydroxylase activity region spans residues 95–99 (TAFGT). Positions 128-132 (HVDHH) match the Histidine box-2 motif. Residues 200–220 (IFALWGIKAIVYLLASSLLGL) form a helical membrane-spanning segment. The short motif at 259–263 (HVEHH) is the Histidine box-3 element.

This sequence belongs to the fatty acid desaturase type 1 family. DEGS subfamily.

Its subcellular location is the endoplasmic reticulum membrane. The enzyme catalyses a dihydroceramide + 2 Fe(II)-[cytochrome b5] + O2 + 2 H(+) = a phytoceramide + 2 Fe(III)-[cytochrome b5] + H2O. It catalyses the reaction an N-acylsphinganine + 2 Fe(II)-[cytochrome b5] + O2 + 2 H(+) = an N-acylsphing-4-enine + 2 Fe(III)-[cytochrome b5] + 2 H2O. The catalysed reaction is N-octanoylsphinganine + 2 Fe(II)-[cytochrome b5] + O2 + 2 H(+) = N-octanoyl-4-hydroxysphinganine + 2 Fe(III)-[cytochrome b5] + H2O. It carries out the reaction an N-acylsphinganine + 2 Fe(II)-[cytochrome b5] + O2 + 2 H(+) = an N-acyl-(4R)-4-hydroxysphinganine + 2 Fe(III)-[cytochrome b5] + H2O. Its pathway is membrane lipid metabolism; sphingolipid biosynthesis. In terms of biological role, bifunctional enzyme which acts both as a sphingolipid delta(4)-desaturase and a sphingolipid C4-monooxygenase. The chain is Sphingolipid delta(4)-desaturase/C4-monooxygenase DES2 from Rattus norvegicus (Rat).